A 533-amino-acid chain; its full sequence is Beta-xylosidase (533 aa).

Aspartate 14 functions as the Proton acceptor in the catalytic mechanism. Glutamate 186 (proton donor) is an active-site residue.

This sequence belongs to the glycosyl hydrolase 43 family. As to quaternary structure, homodimer.

The protein localises to the cell membrane. The enzyme catalyses Hydrolysis of (1-&gt;4)-beta-D-xylans, to remove successive D-xylose residues from the non-reducing termini.. The sequence is that of Beta-xylosidase (xynB) from Bacillus subtilis (strain 168).